The chain runs to 140 residues: MLKTISPLISPTLLKVLAEMGHGDEIIFSDAHFPAHSLGPQVIRADGLSVSDLLRAIIPLFELDSYAPPLVMMAAVEGDTLDPSVEARYRDALSLEAPCPDIVRIDRYAFYERAQKAFAIVITGECAKYGNILLKKGVTP.

His22 functions as the Proton donor in the catalytic mechanism. Residues Asp30, Arg107, and 129–131 (YGN) contribute to the substrate site.

Belongs to the RbsD / FucU family. FucU mutarotase subfamily. In terms of assembly, homodecamer.

Its subcellular location is the cytoplasm. The catalysed reaction is alpha-L-fucose = beta-L-fucose. Its pathway is carbohydrate metabolism; L-fucose metabolism. Involved in the anomeric conversion of L-fucose. The sequence is that of L-fucose mutarotase from Salmonella paratyphi B (strain ATCC BAA-1250 / SPB7).